Reading from the N-terminus, the 278-residue chain is MQVHERSHTGGHTFQCNHGNEKKAPAAGKVHSEGGSARMSLLILVSIFLCAASVMFLVYKYFPQLSEEELEKIKVPRDMDDAKALGKVLSKYKDTFYVEVLVAYFTTYIFLQTFAIPGSIFLSILSGFLYPFPLALFLVCLCSGLGASFCYLLSYLVGRPVVYKYLSDKAIKWSQQVERHRDHLINYIIFLRITPFLPNWFINITSPVINVPLKVFFLGTFIGVAPPSFVAIKAGTTLYQLTTAGEAVSWNSVIILMVLAVLSILPAIFQKKLKQKFE.

A disordered region spans residues 1-31 (MQVHERSHTGGHTFQCNHGNEKKAPAAGKVH). 6 helical membrane passes run 39-59 (MSLLILVSIFLCAASVMFLVY), 96-116 (FYVEVLVAYFTTYIFLQTFAI), 142-162 (CSGLGASFCYLLSYLVGRPVV), 184-204 (LINYIIFLRITPFLPNWFINI), 212-232 (PLKVFFLGTFIGVAPPSFVAI), and 249-269 (SWNSVIILMVLAVLSILPAIF). The segment at 127 to 238 (GFLYPFPLAL…FVAIKAGTTL (112 aa)) is VTT domain; required for its function in autophagy.

It belongs to the TMEM41 family.

Its subcellular location is the endoplasmic reticulum membrane. It localises to the endomembrane system. The enzyme catalyses a 1,2-diacyl-sn-glycero-3-phospho-L-serine(in) = a 1,2-diacyl-sn-glycero-3-phospho-L-serine(out). It catalyses the reaction cholesterol(in) = cholesterol(out). It carries out the reaction a 1,2-diacyl-sn-glycero-3-phosphocholine(in) = a 1,2-diacyl-sn-glycero-3-phosphocholine(out). The catalysed reaction is a 1,2-diacyl-sn-glycero-3-phosphoethanolamine(in) = a 1,2-diacyl-sn-glycero-3-phosphoethanolamine(out). Its function is as follows. Phospholipid scramblase involved in lipid homeostasis and membrane dynamics processes. Has phospholipid scramblase activity toward cholesterol and phosphatidylserine, as well as phosphatidylethanolamine and phosphatidylcholine. Required for autophagosome formation: participates in early stages of autophagosome biogenesis at the endoplasmic reticulum (ER) membrane by reequilibrating the leaflets of the ER as lipids are extracted by atg2 (atg2a or atg2b) to mediate autophagosome assembly. In addition to autophagy, involved in other processes in which phospholipid scramblase activity is required. Required for normal motor neuron development. This chain is Transmembrane protein 41B, found in Xenopus laevis (African clawed frog).